The chain runs to 359 residues: MLNIYDYTLEELKRRLHPPFRAKQLYHWLYHRYEEEFEKMHNLSKEIRQKLTQDYSATLTKVVREEVSEDGSRKYLFQTHDGLTYEAVLLKMKEKKEDEEGRIVEGEKYTICVSSQVGCKVGCSFCFTAKGGFVRNLSAGEIVYQIVALKRLNALAPEKRVNIVYMGMGEPLDNFENLIQAIRILSELDGLSISTKRQTISTSGIAPKIEKLGALDLGVQLAISLHAVDDELRTRLIPMNKAYNIASIIEAVRRFPIDSRKRVMFEYLVIKGVNDDEKSAKTLLKLLNGIKSKVNLIYFNPHEGSEFERPLESKMVAFQKYLTDRGLLCTIRESKGIDISAACGQLREKIIKEENCGNR.

The active-site Proton acceptor is E86. The region spanning 105 to 338 is the Radical SAM core domain; the sequence is EGEKYTICVS…CTIRESKGID (234 aa). C112 and C343 are disulfide-bonded. Residues C119, C123, and C126 each contribute to the [4Fe-4S] cluster site. Residues 169–170, S201, 224–226, and N300 contribute to the S-adenosyl-L-methionine site; these read GE and SLH. C343 (S-methylcysteine intermediate) is an active-site residue.

Belongs to the radical SAM superfamily. RlmN family. Requires [4Fe-4S] cluster as cofactor.

The protein resides in the cytoplasm. It carries out the reaction adenosine(2503) in 23S rRNA + 2 reduced [2Fe-2S]-[ferredoxin] + 2 S-adenosyl-L-methionine = 2-methyladenosine(2503) in 23S rRNA + 5'-deoxyadenosine + L-methionine + 2 oxidized [2Fe-2S]-[ferredoxin] + S-adenosyl-L-homocysteine. It catalyses the reaction adenosine(37) in tRNA + 2 reduced [2Fe-2S]-[ferredoxin] + 2 S-adenosyl-L-methionine = 2-methyladenosine(37) in tRNA + 5'-deoxyadenosine + L-methionine + 2 oxidized [2Fe-2S]-[ferredoxin] + S-adenosyl-L-homocysteine. In terms of biological role, specifically methylates position 2 of adenine 2503 in 23S rRNA and position 2 of adenine 37 in tRNAs. m2A2503 modification seems to play a crucial role in the proofreading step occurring at the peptidyl transferase center and thus would serve to optimize ribosomal fidelity. This chain is Dual-specificity RNA methyltransferase RlmN, found in Wolinella succinogenes (strain ATCC 29543 / DSM 1740 / CCUG 13145 / JCM 31913 / LMG 7466 / NCTC 11488 / FDC 602W) (Vibrio succinogenes).